Consider the following 128-residue polypeptide: uncharacterized protein (128 aa).

4 helical membrane-spanning segments follow: residues 2 to 22, 34 to 54, 64 to 84, and 108 to 128; these read LPFYFLSVATNAAIGFILTVL, FLYDATFSLVLALLSGIAAVC, LPVLGDLIPTLAGGTGCALFL, and LGLFSLAASILHLLFAPTLFL.

The protein resides in the cell membrane. This is an uncharacterized protein from Treponema pallidum (strain Nichols).